We begin with the raw amino-acid sequence, 314 residues long: Taste receptor type 2 member 42 (314 aa).

Residues 1–7 (MATEMDK) lie on the Extracellular side of the membrane. A helical transmembrane segment spans residues 8 to 28 (IFLTLATVEFIIGMLGNVFIG). At 29–50 (LVNCSEGIKNQKVFSVDFILTC) the chain is on the cytoplasmic side. Residues 51 to 71 (LAISTIGHLLVILFDSCVVGL) form a helical membrane-spanning segment. Over 72 to 101 (APHLYATDRVRRPVTMLWHMXNHLTTWLAT) the chain is Extracellular. A helical transmembrane segment spans residues 102-122 (CLSIFYFFKIAHFPHSLFLWL). Topologically, residues 123–127 (RWRMN) are cytoplasmic. The chain crosses the membrane as a helical span at residues 128-148 (RVIAILLTLSLFLLIFDCLVL). Topologically, residues 149-187 (EMFIDXSLNIIDKSNLTLYLDESKTPYDKLSLLKILLSL) are extracellular. Residue asparagine 163 is glycosylated (N-linked (GlcNAc...) asparagine). Residues 188–208 (NSFIPFSLCLTSLLFLFLSLV) traverse the membrane as a helical segment. Residues 209-238 (RHTRNLKLSSLGSRDSSTEAHRRAMKMVMS) lie on the Cytoplasmic side of the membrane. A helical transmembrane segment spans residues 239 to 259 (LLFLFIVHFFSLQVANWTFCI). Residues 260-265 (LGNNKY) are Extracellular-facing. The helical transmembrane segment at 266 to 286 (TQFVTLALHAFPSCHSFILIL) threads the bilayer. At 287–314 (GNSKLRQTAVRLLWHLRNYTKRPNPLPL) the chain is on the cytoplasmic side.

It belongs to the G-protein coupled receptor T2R family.

The protein resides in the membrane. In terms of biological role, receptor that may play a role in the perception of bitterness and is gustducin-linked. May play a role in sensing the chemical composition of the gastrointestinal content. The activity of this receptor may stimulate alpha gustducin, mediate PLC-beta-2 activation and lead to the gating of TRPM5. This Macaca mulatta (Rhesus macaque) protein is Taste receptor type 2 member 42 (TAS2R42).